Consider the following 367-residue polypeptide: Ribosomal lysine N-methyltransferase 5 (367 aa).

A disordered region spans residues 55–74 (EGGRKKKRVRRRNKASSVEE). The segment covering 58 to 68 (RKKKRVRRRNK) has biased composition (basic residues). S-adenosyl-L-methionine-binding positions include Trp110, 170 to 172 (GAG), Asp192, Trp256, and Met288.

It belongs to the class I-like SAM-binding methyltransferase superfamily. RKM5 family.

In terms of biological role, S-adenosyl-L-methionine-dependent protein-lysine N-methyltransferase that monomethylates 60S ribosomal protein L1 (RPL1A and RPL1B) at 'Lys-46'. The polypeptide is Ribosomal lysine N-methyltransferase 5 (RKM5) (Saccharomyces cerevisiae (strain RM11-1a) (Baker's yeast)).